A 718-amino-acid polypeptide reads, in one-letter code: LON peptidase N-terminal domain and RING finger protein 3 (718 aa).

A disordered region spans residues 1 to 69; sequence MESLRTEQML…PGTSTPESKV (69 aa). Polar residues predominate over residues 57–66; that stretch reads EQSPGTSTPE. A TPR 1 repeat occupies 67-100; sequence SKVLLTQADALASRGRIREALEVYRQLSERQQLV. The RING-type 1 zinc finger occupies 158-196; that stretch reads CRKCHGFLSDPVSLSCGHTFCKLCLERGRAADRRCALCG. TPR repeat units follow at residues 243–276 and 278–310; these read ASQL…APND and LLYS…RPMG. The segment at 322–413 is disordered; the sequence is SQEEAAARGD…TDQGDKPALS (92 aa). Positions 339–352 are enriched in basic and acidic residues; that stretch reads AKVKGDGQQHHMKD. Residues 426-464 form an RING-type 2 zinc finger; the sequence is CALCMRLFYEPVTTPCGHTFCLKCLERCLDHNAKCPLCK. In terms of domain architecture, Lon N-terminal spans 505 to 714; that stretch reads MEELSNLNKN…GIRRVLAFIS (210 aa).

In Macaca fascicularis (Crab-eating macaque), this protein is LON peptidase N-terminal domain and RING finger protein 3 (LONRF3).